A 278-amino-acid chain; its full sequence is Toxin coregulated pilus biosynthesis protein D (278 aa).

Residues 30-50 (LLVAIIFLVLSILGGGAYLYY) traverse the membrane as a helical segment.

The protein resides in the cell membrane. Functionally, involved in TCP pilus biogenesis. This is Toxin coregulated pilus biosynthesis protein D (tcpD) from Vibrio cholerae serotype O1 (strain ATCC 39315 / El Tor Inaba N16961).